Consider the following 227-residue polypeptide: Ribonuclease 3 (227 aa).

One can recognise an RNase III domain in the interval 4–126 (LDRLERKIGY…IIGAMSLDQG (123 aa)). Residue E39 participates in Mg(2+) binding. Residue D43 is part of the active site. D112 and E115 together coordinate Mg(2+). The active site involves E115. In terms of domain architecture, DRBM spans 153–226 (DAKTRLQEYL…AEQILKELDI (74 aa)).

The protein belongs to the ribonuclease III family. In terms of assembly, homodimer. Requires Mg(2+) as cofactor.

The protein resides in the cytoplasm. The enzyme catalyses Endonucleolytic cleavage to 5'-phosphomonoester.. Digests double-stranded RNA. Involved in the processing of primary rRNA transcript to yield the immediate precursors to the large and small rRNAs (23S and 16S). Processes some mRNAs, and tRNAs when they are encoded in the rRNA operon. Processes pre-crRNA and tracrRNA of type II CRISPR loci if present in the organism. In Haemophilus influenzae (strain ATCC 51907 / DSM 11121 / KW20 / Rd), this protein is Ribonuclease 3.